A 594-amino-acid polypeptide reads, in one-letter code: MKASTDHHVSGPPPVMIERVTRGGRRLFYRIDVIQQPEKCRACGSGPKSSTDRRPVDPPPVVELRIFEGPRFEEAKDITFTYNANFFLFATLEKARPMAHGRVTGPVVDAPPVLTGMPVSGMAYLDRPIEAGYFLFPDLSVRHEGTYRLSFNLYEETKDDRDKDMEPDEPSSEPQGFFYHRMEIKSADFACFSAKKFPGLGLSTPLSMTMAEQGTRVRIRRDVRMRRRDGKPSSGGGDFSSNSNNNAEDEAARRRRTRTPEPPAREDLRRSLSGTGDAPARNPEPQRRPSAADYRAPPPPNPPPPGFPSAQVPATSHLTFGGAPYGSHSQYQQPTSSSSSSEQVSSVPQSPAYSSHAAQQHYGQAPQPPTPTYPERRLSDHRSSQPNNHPQQSPHQHSYSHRSSPQRERFMPDSRRPSAPSHSHILSARPMTPQSANELRRPSDYNRPIPPPTDVLVADTQATPHLPPIRWPRPNMNLPSPPSEHQEALQPLQPAPLHYESQTHQQQLGGRKRTHDSYEEHSYSYGYSYSHNHSHGYGPTPSARPPAKNRKRPEDVEEKYTVTETMVVDRPEQFFPKPLKYVWTQCRAEPPPRE.

A Velvet domain is found at 24–220; sequence GRRLFYRIDV…AEQGTRVRIR (197 aa). A Nuclear localization signal motif is present at residues 38–43; that stretch reads EKCRAC. Disordered regions lie at residues 40–59 and 210–558; these read CRAC…VDPP and MAEQ…DVEE. The segment covering 217–229 has biased composition (basic residues); that stretch reads VRIRRDVRMRRRD. Over residues 296 to 307 the composition is skewed to pro residues; that stretch reads APPPPNPPPPGF. Over residues 327 to 351 the composition is skewed to low complexity; sequence SHSQYQQPTSSSSSSEQVSSVPQSP. The span at 352–362 shows a compositional bias: polar residues; sequence AYSSHAAQQHY. The segment covering 374 to 383 has biased composition (basic and acidic residues); sequence PERRLSDHRS. A compositionally biased stretch (low complexity) spans 384–403; that stretch reads SQPNNHPQQSPHQHSYSHRS. Basic and acidic residues predominate over residues 405–416; sequence PQRERFMPDSRR. Residues 457-506 are PEST; sequence VADTQATPHLPPIRWPRPNMNLPSPPSEHQEALQPLQPAPLHYESQTHQQ. Residues 523 to 538 show a composition bias toward low complexity; that stretch reads YSYGYSYSHNHSHGYG.

This sequence belongs to the velvet family. VeA subfamily. Component of the heterotrimeric velvet complex composed of LAEA, VEA and VELB; VEA acting as a bridging protein between LAEA and VELB.

The protein resides in the nucleus. It localises to the cytoplasm. Component of the velvet transcription factor complex that controls sexual/asexual developmental ratio in response to light, promoting sexual development in the darkness while stimulating asexual sporulation under illumination. The velvet complex acts as a global regulator for secondary metabolite gene expression. Regulates of the response to reactive oxygen species (ROS) stress. The protein is Developmental and secondary metabolism regulator veA of Pyricularia oryzae (strain 70-15 / ATCC MYA-4617 / FGSC 8958) (Rice blast fungus).